Consider the following 2025-residue polypeptide: Pericentriolar material 1 protein (2025 aa).

Residues 1 to 91 (MATGGGPFEE…TFPHSRYMTQ (91 aa)) form a disordered region. The residue at position 2 (Ala-2) is an N-acetylalanine. A mediates interaction with DZIP1 region spans residues 2 to 1458 (ATGGGPFEEV…TWVASNSELT (1457 aa)). A phosphoserine mark is found at Ser-65, Ser-68, Ser-69, Ser-93, Ser-110, Ser-116, Ser-119, and Ser-159. Residues 111-140 (DLDQRSIGSDSQGRATAANNKRQLSENRKP) are disordered. Residues 116–132 (SIGSDSQGRATAANNKR) show a composition bias toward polar residues. The stretch at 218–301 (KASSMREDLV…QLRALQGRQA (84 aa)) forms a coiled coil. The segment at 354–390 (RDSQPPAVPDNRRQAESLSLTREISQSRNPSVSEHLP) is disordered. Residues 369 to 385 (ESLSLTREISQSRNPSV) are compositionally biased toward polar residues. Position 370 is a phosphoserine (Ser-370). Ser-372 carries the phosphoserine; by PLK4 modification. Ser-384 is subject to Phosphoserine. At Lys-399 the chain carries N6-acetyllysine. Coiled-coil stretches lie at residues 399-426 (KMRV…QHLN) and 492-518 (AEKL…YEQT). Disordered stretches follow at residues 528–553 (ENTK…VTNI) and 565–586 (VNTN…VNSN). The span at 531 to 540 (KDEETEESEY) shows a compositional bias: acidic residues. Phosphoserine is present on Ser-593. Positions 620 to 654 (AHGEDEEEEVEEEGVSGASLSSRRSSLVDEAPEDE) are disordered. Positions 623–633 (EDEEEEVEEEG) are enriched in acidic residues. Residues 634–644 (VSGASLSSRRS) show a composition bias toward low complexity. Ser-644 is modified (phosphoserine). Coiled-coil stretches lie at residues 652–772 (EDEE…PDLQ) and 822–856 (SDMR…GLAE). Phosphothreonine is present on Thr-857. Phosphoserine occurs at positions 859, 864, 867, and 870. Disordered regions lie at residues 866-885 (RSDG…EKTM) and 913-940 (TDEE…NQNS). Over residues 870-879 (SENLCTPQQS) the composition is skewed to polar residues. Residue Thr-875 is modified to Phosphothreonine. A phosphoserine mark is found at Ser-957, Ser-974, Ser-985, and Ser-988. 2 coiled-coil regions span residues 985-1017 (SELS…CQTL) and 1061-1086 (QLTW…QNQH). Disordered stretches follow at residues 1081 to 1105 (RQQN…PSSP) and 1149 to 1213 (FSQN…YDQE). Positions 1086–1096 (HPEKPRSKERG) are enriched in basic and acidic residues. The span at 1149-1169 (FSQNVSTPTEQQQPLAQNPSG) shows a compositional bias: polar residues. Residues Ser-1182 and Ser-1185 each carry the phosphoserine modification. The segment covering 1189–1198 (EKQRNQKQPE) has biased composition (basic and acidic residues). Phosphoserine occurs at positions 1228, 1254, 1257, 1259, and 1260. A disordered region spans residues 1230–1310 (EKATNSNRKN…STQLKSRVKN (81 aa)). Polar residues predominate over residues 1268–1285 (TTVTKTFKTRKASAQASL). A phosphoserine mark is found at Ser-1315 and Ser-1317. The disordered stretch occupies residues 1319–1338 (SSTCEPCKNRNRHSAQTEEP). Position 1466 is a phosphothreonine (Thr-1466). Phosphoserine is present on residues Ser-1571, Ser-1695, Ser-1729, Ser-1766, Ser-1769, Ser-1777, and Ser-1783. A disordered region spans residues 1720 to 1943 (KRILEGDHGS…AGSPDTESPV (224 aa)). The span at 1756 to 1768 (YDAKGPKNVRSDV) shows a compositional bias: basic and acidic residues. A compositionally biased stretch (polar residues) spans 1784–1798 (INLSKAESQALTNYG). Positions 1800-1816 (GEDENEDEEMEDFEESP) are enriched in acidic residues. 4 stretches are compositionally biased toward polar residues: residues 1818–1828 (DIQTSLQANTE), 1849–1858 (ESTNVPSDQE), 1879–1901 (ENEQ…SSKQ), and 1925–1934 (AQETPESSLA). Residues Ser-1959 and Ser-1978 each carry the phosphoserine modification.

It belongs to the PCM1 family. In terms of assembly, self-associates. Interacts with BBS4, BBS8, CETN3, HAP1, NDE1, NDEL1, MAP1LC3B, GABARAPAL2, and GABARAP. Interacts with CEP131; the interaction increases in response to ultraviolet light (UV) radiation. Associates with microtubule; association to microtubule is reduced in response to cellular stress, such as ultraviolet light (UV) radiation or heat shock, in a process that requires p38 MAP kinase signaling. Interacts with C2CD3. Interacts with CFAP263. Interacts with SSX2IP. Interacts with CCDC13. Interacts with CEP290. Interacts with PARD6A. Interacts with KIAA0753/OFIP, CEP20/FOR20 and OFD1; the interaction with CEP20/FOR20 and OFD1 may be mediated by KIAA0753/OFIP. Interacts with CCDC66. Interacts with CCDC61. Interacts with DZIP1; localizes DZIP1 and the associated BBSome to centriolar satellite. Interacts with CSTPP1, TTLL1, TPGS1 and LRRC49. Interacts with CFAP53. In terms of processing, ubiquitinated. Undergoes monoubiquitination catalyzed by the E3 ubiquitin-protein ligase MIB1 in proliferating cells, preventing cilia formation. Monoubiquitination by MIB1 is inhibited in response to cellular stress, such as ultraviolet light (UV) radiation or heat shock, resulting in cilia formation initiation. Post-translationally, phosphorylated on multiple serine and threonine residues by DYRK3 during the G2-to-M transition, after the nuclear-envelope breakdown. Phosphorylation by DYRK3 promotes disassembly of pericentriolar material. Phosphorylation at Ser-372 mediated by PLK4 is required to maintain the integrity of centriolar satellites. As to expression, expressed in the hippocampus and dentate gyrus, the columnar epithelial cells of bronchioles, the olfactory epithelium, the pericardium and the inner segment of the retina.

The protein localises to the cytoplasm. Its subcellular location is the cytoskeleton. It localises to the microtubule organizing center. It is found in the centrosome. The protein resides in the cytoplasmic granule. The protein localises to the centriolar satellite. Its subcellular location is the cilium basal body. In terms of biological role, required for centrosome assembly and function. Essential for the correct localization of several centrosomal proteins including CEP250, CETN3, PCNT and NEK2. Required to anchor microtubules to the centrosome. Also involved in cilium biogenesis by recruiting the BBSome, a ciliary protein complex involved in cilium biogenesis, to the centriolar satellites. Recruits the tubulin polyglutamylase complex (TPGC) to centriolar satellites. The protein is Pericentriolar material 1 protein of Mus musculus (Mouse).